The following is a 384-amino-acid chain: Beta-ureidopropionase (384 aa).

Residues 72–344 (VHVGLVQNRI…DGLLVAKLDL (273 aa)) enclose the CN hydrolase domain. Glutamate 119 serves as the catalytic Proton acceptor. Residue lysine 196 is the Proton donor of the active site. The Nucleophile role is filled by cysteine 233. Serine 378 carries the post-translational modification Phosphoserine.

It belongs to the carbon-nitrogen hydrolase superfamily. BUP family. Homodimer, homotetramer, homooctamer; can also form higher homooligomers. Detected in liver (at protein level).

The protein resides in the cytoplasm. It carries out the reaction 3-(carbamoylamino)propanoate + H2O + 2 H(+) = beta-alanine + NH4(+) + CO2. It catalyses the reaction 3-(carbamoylamino)-2-methylpropanoate + H2O + 2 H(+) = (R)-3-amino-2-methylpropanoate + NH4(+) + CO2. It participates in amino-acid biosynthesis; beta-alanine biosynthesis. Its activity is regulated as follows. Strongly inhibited by 50 mM Zn(2+). Not inhibited by EDTA. Competitively inhibited by beta-alanine, 5-aminolevulinic acid (ALA), beta-aminoisobutyrate and 4-ureidobutyrate. Functionally, catalyzes a late step in pyrimidine degradation. Converts N-carbamoyl-beta-alanine (3-ureidopropanoate) into beta-alanine, ammonia and carbon dioxide. Likewise, converts N-carbamoyl-beta-aminoisobutyrate (3-ureidoisobutyrate) into beta-aminoisobutyrate, ammonia and carbon dioxide. The sequence is that of Beta-ureidopropionase (UPB1) from Homo sapiens (Human).